The sequence spans 149 residues: UPF0178 protein CPR_2251 (149 aa).

It belongs to the UPF0178 family.

In Clostridium perfringens (strain SM101 / Type A), this protein is UPF0178 protein CPR_2251.